Consider the following 353-residue polypeptide: Photosystem II D2 protein (353 aa).

Residue T2 is modified to N-acetylthreonine. T2 carries the post-translational modification Phosphothreonine. Residues 41-61 form a helical membrane-spanning segment; sequence CAYFALGGWFTGTTFVTSWYT. H118 is a binding site for chlorophyll a. A helical membrane pass occupies residues 125–141; sequence GFMLRQFELARSVQLRP. Pheophytin a-binding residues include Q130 and N143. The chain crosses the membrane as a helical span at residues 153–166; sequence VFVSVFLIYPLGQS. Residue H198 coordinates chlorophyll a. The helical transmembrane segment at 208 to 228 threads the bilayer; the sequence is AALLCAIHGATVENTLFEDGD. Positions 215 and 262 each coordinate a plastoquinone. H215 contacts Fe cation. Residue H269 participates in Fe cation binding. The chain crosses the membrane as a helical span at residues 279–295; the sequence is GLWMSAIGVVGLALNLR.

The protein belongs to the reaction center PufL/M/PsbA/D family. PSII is composed of 1 copy each of membrane proteins PsbA, PsbB, PsbC, PsbD, PsbE, PsbF, PsbH, PsbI, PsbJ, PsbK, PsbL, PsbM, PsbT, PsbX, PsbY, PsbZ, Psb30/Ycf12, at least 3 peripheral proteins of the oxygen-evolving complex and a large number of cofactors. It forms dimeric complexes. Requires The D1/D2 heterodimer binds P680, chlorophylls that are the primary electron donor of PSII, and subsequent electron acceptors. It shares a non-heme iron and each subunit binds pheophytin, quinone, additional chlorophylls, carotenoids and lipids. There is also a Cl(-1) ion associated with D1 and D2, which is required for oxygen evolution. The PSII complex binds additional chlorophylls, carotenoids and specific lipids. as cofactor.

Its subcellular location is the plastid. The protein resides in the chloroplast thylakoid membrane. The catalysed reaction is 2 a plastoquinone + 4 hnu + 2 H2O = 2 a plastoquinol + O2. Functionally, photosystem II (PSII) is a light-driven water:plastoquinone oxidoreductase that uses light energy to abstract electrons from H(2)O, generating O(2) and a proton gradient subsequently used for ATP formation. It consists of a core antenna complex that captures photons, and an electron transfer chain that converts photonic excitation into a charge separation. The D1/D2 (PsbA/PsbD) reaction center heterodimer binds P680, the primary electron donor of PSII as well as several subsequent electron acceptors. D2 is needed for assembly of a stable PSII complex. The protein is Photosystem II D2 protein of Phalaenopsis aphrodite subsp. formosana (Moth orchid).